Reading from the N-terminus, the 135-residue chain is Gene 52 protein (135 aa).

Disordered regions lie at residues 1–20 (MASGGGGGSKRCPKKQPTPE) and 110–135 (LGGRASSDSSKASKPRGRSKHRAEKQ). Positions 122–135 (SKPRGRSKHRAEKQ) are enriched in basic residues.

The protein belongs to the herpesviridae BLRF2 family.

The chain is Gene 52 protein (52) from Equine herpesvirus 2 (strain 86/87) (EHV-2).